The sequence spans 519 residues: Sodium-dependent dicarboxylate transporter SdcS (519 aa).

The next 14 helical transmembrane spans lie at 29 to 49 (VGQL…LLLF), 59 to 79 (VFVL…AIPI), 103 to 123 (AQYG…AIAM), 136 to 156 (IINT…IATG), 159 to 179 (SMFV…LAII), 201 to 221 (ALVL…LIGT), 241 to 261 (FAKW…LVWI), 297 to 317 (KVVL…EFLL), 322 to 342 (FTSE…LFLI), 362 to 382 (LPWG…GISE), 395 to 415 (LIEG…VLFL), 428 to 448 (ILPI…LLMV), 451 to 471 (AMAA…AIVF), and 490 to 510 (LLSI…VLGI).

The protein belongs to the SLC13A/DASS transporter (TC 2.A.47) family. NADC subfamily.

The protein localises to the cell membrane. Mediates the transport of dicarboxylates across the cytoplasmic membrane via a Na(+)-electrochemical gradient. This is Sodium-dependent dicarboxylate transporter SdcS (sdcS) from Staphylococcus saprophyticus subsp. saprophyticus (strain ATCC 15305 / DSM 20229 / NCIMB 8711 / NCTC 7292 / S-41).